A 283-amino-acid chain; its full sequence is Pantothenate synthetase (283 aa).

30 to 37 (MGYLHEGH) provides a ligand contact to ATP. Histidine 37 functions as the Proton donor in the catalytic mechanism. A (R)-pantoate-binding site is contributed by glutamine 61. Residue glutamine 61 participates in beta-alanine binding. Residue 147–150 (GQKD) coordinates ATP. Residue glutamine 153 coordinates (R)-pantoate. ATP is bound by residues valine 176 and 184–187 (LSSR).

It belongs to the pantothenate synthetase family. Homodimer.

It is found in the cytoplasm. It carries out the reaction (R)-pantoate + beta-alanine + ATP = (R)-pantothenate + AMP + diphosphate + H(+). It participates in cofactor biosynthesis; (R)-pantothenate biosynthesis; (R)-pantothenate from (R)-pantoate and beta-alanine: step 1/1. Catalyzes the condensation of pantoate with beta-alanine in an ATP-dependent reaction via a pantoyl-adenylate intermediate. This chain is Pantothenate synthetase, found in Moorella thermoacetica (strain ATCC 39073 / JCM 9320).